An 859-amino-acid chain; its full sequence is Collagen alpha-1(II) chain (859 aa).

The disordered stretch occupies residues 1–607; it reads LQGLPGKDGE…LGQTEKGPDP (607 aa). Residues P31 and P40 each carry the 4-hydroxyproline modification. P42 is modified (3-hydroxyproline). 4-hydroxyproline is present on residues P43 and P46. Over residues 78 to 121 the composition is skewed to low complexity; that stretch reads ERGSPGAQGLQGPRGLPGTPGTDGPKGATGPAGPNGAQGPPGLQ. Positions 136 to 147 are enriched in basic and acidic residues; it reads KGDRGDVGEKGP. 2 stretches are compositionally biased toward low complexity: residues 204-220 and 249-277; these read PAGFAGPPGADGQPGAK and PTGVTGPKGARGAQGPPGATGFPGAAGRV. P279 is modified (3-hydroxyproline). A compositionally biased stretch (pro residues) spans 279–292; sequence PPGPNGNPGPPGPP. 3 positions are modified to 4-hydroxyproline: P280, P286, and P292. Residues 306 to 321 show a composition bias toward low complexity; sequence DAGPPGRAGDPGLQGP. The span at 487-501 shows a compositional bias: basic and acidic residues; sequence RGDKGETGEAGERGL. A triple-helical region region spans residues 491–586; the sequence is GETGEAGERG…PGPPGPPGPP (96 aa). P516 is modified (3-hydroxyproline). Positions 520–529 are enriched in low complexity; that stretch reads SGDQGAAGPA. P553 bears the 4-hydroxyproline mark. The residue at position 558 (P558) is a 3-hydroxyproline. Position 559 is a 4-hydroxyproline (P559). Positions 570–586 are enriched in pro residues; it reads PAGPPGNPGPPGPPGPP. P573 carries the post-translational modification 3-hydroxyproline. P574 and P577 each carry 4-hydroxyproline. P579 carries the post-translational modification 3-hydroxyproline. P580 and P583 each carry 4-hydroxyproline. P585 is modified (3-hydroxyproline). P586 is modified (4-hydroxyproline). Residues 587 to 613 are nonhelical region (C-terminal); that stretch reads GTGIDMSAFAGLGQTEKGPDPIRYMRA. Residues 614-859 constitute a propeptide, C-terminal propeptide; sequence DEAAGGLRQH…GVDIGPVCFL (246 aa). In terms of domain architecture, Fibrillar collagen NC1 spans 625–859; that stretch reads VEVDATLKSL…GVDIGPVCFL (235 aa). 3 cysteine pairs are disulfide-bonded: C655/C687, C695/C857, and C765/C810. Residues D673, N675, Q676, C678, and D681 each contribute to the Ca(2+) site. N760 carries an N-linked (GlcNAc...) asparagine glycan.

Belongs to the fibrillar collagen family. Homotrimers of alpha 1(II) chains. In terms of processing, contains mostly 4-hydroxyproline. Prolines at the third position of the tripeptide repeating unit (G-X-P) are 4-hydroxylated in some or all of the chains. Post-translationally, contains 3-hydroxyproline at a few sites. This modification occurs on the first proline residue in the sequence motif Gly-Pro-Hyp, where Hyp is 4-hydroxyproline. Lysine residues at the third position of the tripeptide repeating unit (G-X-Y) are 5-hydroxylated in some or all of the chains. In terms of processing, O-glycosylated on hydroxylated lysine residues. The O-linked glycan consists of a Glc-Gal disaccharide.

Its subcellular location is the secreted. It is found in the extracellular space. The protein localises to the extracellular matrix. Functionally, type II collagen is specific for cartilaginous tissues. It is essential for the normal embryonic development of the skeleton, for linear growth and for the ability of cartilage to resist compressive forces. In Gallus gallus (Chicken), this protein is Collagen alpha-1(II) chain.